The chain runs to 97 residues: Co-chaperonin GroES (97 aa).

The protein belongs to the GroES chaperonin family. As to quaternary structure, heptamer of 7 subunits arranged in a ring. Interacts with the chaperonin GroEL.

The protein localises to the cytoplasm. Functionally, together with the chaperonin GroEL, plays an essential role in assisting protein folding. The GroEL-GroES system forms a nano-cage that allows encapsulation of the non-native substrate proteins and provides a physical environment optimized to promote and accelerate protein folding. GroES binds to the apical surface of the GroEL ring, thereby capping the opening of the GroEL channel. This is Co-chaperonin GroES from Wigglesworthia glossinidia brevipalpis.